The primary structure comprises 286 residues: Nucleotide-binding protein HCH_05324 (286 aa).

Residue 8 to 15 (GRSGSGKS) participates in ATP binding. A GTP-binding site is contributed by 60-63 (DARN).

Belongs to the RapZ-like family.

Functionally, displays ATPase and GTPase activities. In Hahella chejuensis (strain KCTC 2396), this protein is Nucleotide-binding protein HCH_05324.